We begin with the raw amino-acid sequence, 178 residues long: Large ribosomal subunit protein uL6 (178 aa).

Belongs to the universal ribosomal protein uL6 family. As to quaternary structure, part of the 50S ribosomal subunit. Interacts weakly with protein L13.

This protein binds to the 23S rRNA, and is important in its secondary structure. It is located near the subunit interface in the base of the L7/L12 stalk, and near the tRNA binding site of the peptidyltransferase center. The protein is Large ribosomal subunit protein uL6 of Haloarcula marismortui (strain ATCC 43049 / DSM 3752 / JCM 8966 / VKM B-1809) (Halobacterium marismortui).